The sequence spans 322 residues: (12E)-labda-8(17),12,14-triene synthase (322 aa).

Residues Met1–Pro11 are compositionally biased toward polar residues. The tract at residues Met1–Pro26 is disordered. Mg(2+) is bound by residues Asp93 and Glu98. Residues Asp93–Glu98 carry the DDXXXE motif motif. Arg188 is a substrate binding site. Residues Asn234 and Ser238 each coordinate Mg(2+). Residues Asn234 to Glu242 carry the NXXXSXXXE motif motif. Lys241 contacts substrate. Glu242 provides a ligand contact to Mg(2+). Substrate is bound at residue Arg319–Tyr320.

It belongs to the terpene synthase family. Mg(2+) is required as a cofactor.

The catalysed reaction is (+)-copalyl diphosphate = (12E)-labda-8(17),12,14-triene + diphosphate. In terms of biological role, involved in the biosynthesis of the labdane-type bicyclic diterpene labda-8(17),12(E),14-triene. Catalyzes the conversion of (+)-copalyl diphosphate to yield labda-8(17),12(E),14-triene. This is (12E)-labda-8(17),12,14-triene synthase from Streptomyces anulatus (Streptomyces chrysomallus).